A 351-amino-acid chain; its full sequence is Dihydroorotate dehydrogenase (quinone) (351 aa).

FMN-binding positions include 65 to 69 (AGLDK) and Thr89. Position 69 (Lys69) interacts with substrate. A substrate-binding site is contributed by 114 to 118 (NRLGF). Asn150 and Asn183 together coordinate FMN. Asn183 is a substrate binding site. Ser186 acts as the Nucleophile in catalysis. Asn188 is a binding site for substrate. Residues Lys228 and Thr256 each contribute to the FMN site. Residue 257–258 (NT) coordinates substrate. Residues Gly279, Gly308, and 329-330 (YT) contribute to the FMN site.

This sequence belongs to the dihydroorotate dehydrogenase family. Type 2 subfamily. As to quaternary structure, monomer. The cofactor is FMN.

It is found in the cell membrane. It catalyses the reaction (S)-dihydroorotate + a quinone = orotate + a quinol. Its pathway is pyrimidine metabolism; UMP biosynthesis via de novo pathway; orotate from (S)-dihydroorotate (quinone route): step 1/1. Its function is as follows. Catalyzes the conversion of dihydroorotate to orotate with quinone as electron acceptor. The chain is Dihydroorotate dehydrogenase (quinone) from Acidovorax ebreus (strain TPSY) (Diaphorobacter sp. (strain TPSY)).